Reading from the N-terminus, the 163-residue chain is uncharacterized protein (163 aa).

Disordered regions lie at residues 1 to 78 (MHSL…NPHS) and 115 to 163 (PKWL…LPCH).

This is an uncharacterized protein from Homo sapiens (Human).